We begin with the raw amino-acid sequence, 187 residues long: Ribonuclease HII (187 aa).

Positions 1–187 (MICGTDEAGR…NPVKRLLANL (187 aa)) constitute an RNase H type-2 domain. D6, E7, and D98 together coordinate a divalent metal cation.

The protein belongs to the RNase HII family. Mn(2+) serves as cofactor. It depends on Mg(2+) as a cofactor.

The protein localises to the cytoplasm. It carries out the reaction Endonucleolytic cleavage to 5'-phosphomonoester.. Functionally, endonuclease that specifically degrades the RNA of RNA-DNA hybrids. The polypeptide is Ribonuclease HII (Idiomarina loihiensis (strain ATCC BAA-735 / DSM 15497 / L2-TR)).